A 558-amino-acid chain; its full sequence is Formate--tetrahydrofolate ligase (558 aa).

67–74 contributes to the ATP binding site; sequence TPAGEGKT.

This sequence belongs to the formate--tetrahydrofolate ligase family.

The enzyme catalyses (6S)-5,6,7,8-tetrahydrofolate + formate + ATP = (6R)-10-formyltetrahydrofolate + ADP + phosphate. It participates in one-carbon metabolism; tetrahydrofolate interconversion. The polypeptide is Formate--tetrahydrofolate ligase (Ruegeria pomeroyi (strain ATCC 700808 / DSM 15171 / DSS-3) (Silicibacter pomeroyi)).